The primary structure comprises 242 residues: ATP-dependent dethiobiotin synthetase BioD (242 aa).

Residue 12–17 (EVGKTV) coordinates ATP. Threonine 16 is a Mg(2+) binding site. Residue lysine 37 is part of the active site. Serine 41 serves as a coordination point for substrate. ATP-binding positions include aspartate 51 and 112–115 (EGAG). Mg(2+) is bound by residues aspartate 51 and glutamate 112.

The protein belongs to the dethiobiotin synthetase family. In terms of assembly, homodimer. The cofactor is Mg(2+).

Its subcellular location is the cytoplasm. The enzyme catalyses (7R,8S)-7,8-diammoniononanoate + CO2 + ATP = (4R,5S)-dethiobiotin + ADP + phosphate + 3 H(+). It functions in the pathway cofactor biosynthesis; biotin biosynthesis; biotin from 7,8-diaminononanoate: step 1/2. Functionally, catalyzes a mechanistically unusual reaction, the ATP-dependent insertion of CO2 between the N7 and N8 nitrogen atoms of 7,8-diaminopelargonic acid (DAPA, also called 7,8-diammoniononanoate) to form a ureido ring. The chain is ATP-dependent dethiobiotin synthetase BioD from Bacillus cereus (strain G9842).